A 387-amino-acid polypeptide reads, in one-letter code: 3-ketoacyl-CoA thiolase (387 aa).

Catalysis depends on C91, which acts as the Acyl-thioester intermediate. Residues H343 and C373 each act as proton acceptor in the active site.

Belongs to the thiolase-like superfamily. Thiolase family. Heterotetramer of two alpha chains (FadB) and two beta chains (FadA).

It is found in the cytoplasm. The enzyme catalyses an acyl-CoA + acetyl-CoA = a 3-oxoacyl-CoA + CoA. It functions in the pathway lipid metabolism; fatty acid beta-oxidation. Its function is as follows. Catalyzes the final step of fatty acid oxidation in which acetyl-CoA is released and the CoA ester of a fatty acid two carbons shorter is formed. The polypeptide is 3-ketoacyl-CoA thiolase (Shewanella sp. (strain MR-7)).